Reading from the N-terminus, the 377-residue chain is Copper-containing nitrite reductase (377 aa).

The segment at residues 1–35 is a signal peptide (tat-type signal); that stretch reads MTNTLQMTRRTMLTGAAVAGALTPILTSGGGNASP. Plastocyanin-like domains are found at residues 99-194 and 259-360; these read MTFD…IMVL and GAVG…FKVT. 7 residues coordinate Cu cation: His-132, His-137, His-172, Cys-173, His-182, Met-187, and His-343.

The protein belongs to the multicopper oxidase family. Homotrimer. Requires Cu(2+) as cofactor. Cu(+) serves as cofactor. It depends on FAD as a cofactor. Predicted to be exported by the Tat system. The position of the signal peptide cleavage has not been experimentally proven.

Its subcellular location is the periplasm. It carries out the reaction nitric oxide + Fe(III)-[cytochrome c] + H2O = Fe(II)-[cytochrome c] + nitrite + 2 H(+). The protein operates within nitrogen metabolism; nitrate reduction (denitrification); dinitrogen from nitrate: step 2/4. This Rhizobium sullae (Rhizobium hedysari) protein is Copper-containing nitrite reductase (nirK).